A 246-amino-acid chain; its full sequence is 5'-nucleotidase SurE (246 aa).

4 residues coordinate a divalent metal cation: aspartate 8, aspartate 9, serine 39, and asparagine 91.

It belongs to the SurE nucleotidase family. It depends on a divalent metal cation as a cofactor.

Its subcellular location is the cytoplasm. The catalysed reaction is a ribonucleoside 5'-phosphate + H2O = a ribonucleoside + phosphate. Nucleotidase that shows phosphatase activity on nucleoside 5'-monophosphates. The sequence is that of 5'-nucleotidase SurE from Histophilus somni (strain 129Pt) (Haemophilus somnus).